A 142-amino-acid polypeptide reads, in one-letter code: Nucleoside diphosphate kinase (142 aa).

ATP is bound by residues lysine 11, phenylalanine 59, arginine 87, threonine 93, arginine 104, and asparagine 114. Residue histidine 117 is the Pros-phosphohistidine intermediate of the active site.

The protein belongs to the NDK family. Homotetramer. It depends on Mg(2+) as a cofactor.

Its subcellular location is the cytoplasm. The catalysed reaction is a 2'-deoxyribonucleoside 5'-diphosphate + ATP = a 2'-deoxyribonucleoside 5'-triphosphate + ADP. It catalyses the reaction a ribonucleoside 5'-diphosphate + ATP = a ribonucleoside 5'-triphosphate + ADP. Major role in the synthesis of nucleoside triphosphates other than ATP. The ATP gamma phosphate is transferred to the NDP beta phosphate via a ping-pong mechanism, using a phosphorylated active-site intermediate. The polypeptide is Nucleoside diphosphate kinase (Hahella chejuensis (strain KCTC 2396)).